The primary structure comprises 182 residues: MKIDKKYFRKVVNEIIAKTDKSEENLLKISSILDILNKLFKENQTFRNIVLNPKASMEDKEKLMEKVLSALGVDAEISKLLIKIVKDKKANIFKELNKVFKFEVEKFFGTVQGEIISAYKIDEALLNEIKSVIESKIGKKVEFTVKEDNSLIGGAVIKAGTYIIDTSVKSYLKRLESTLSRF.

Belongs to the ATPase delta chain family. As to quaternary structure, F-type ATPases have 2 components, F(1) - the catalytic core - and F(0) - the membrane proton channel. F(1) has five subunits: alpha(3), beta(3), gamma(1), delta(1), epsilon(1). F(0) has three main subunits: a(1), b(2) and c(10-14). The alpha and beta chains form an alternating ring which encloses part of the gamma chain. F(1) is attached to F(0) by a central stalk formed by the gamma and epsilon chains, while a peripheral stalk is formed by the delta and b chains.

The protein localises to the cell inner membrane. Functionally, f(1)F(0) ATP synthase produces ATP from ADP in the presence of a proton or sodium gradient. F-type ATPases consist of two structural domains, F(1) containing the extramembraneous catalytic core and F(0) containing the membrane proton channel, linked together by a central stalk and a peripheral stalk. During catalysis, ATP synthesis in the catalytic domain of F(1) is coupled via a rotary mechanism of the central stalk subunits to proton translocation. Its function is as follows. This protein is part of the stalk that links CF(0) to CF(1). It either transmits conformational changes from CF(0) to CF(1) or is implicated in proton conduction. This is ATP synthase subunit delta from Sulfurihydrogenibium sp. (strain YO3AOP1).